Consider the following 350-residue polypeptide: Transmembrane protein 185B (350 aa).

The next 7 membrane-spanning stretches (helical) occupy residues 16–36 (LIYT…DGII), 41–61 (WAVF…ASVG), 81–101 (FKAM…EVLV), 111–131 (FWLL…AACV), 168–188 (WLVV…VVLY), 211–231 (VTMA…EVLL), and 240–260 (TFSY…LMAT).

It belongs to the TMEM185 family.

It localises to the membrane. The chain is Transmembrane protein 185B (TMEM185B) from Homo sapiens (Human).